Reading from the N-terminus, the 475-residue chain is Cytochrome P450 monooxygenase sthD (475 aa).

The N-terminal stretch at 1–17 (MAAYFLLGLYGSTLVYR) is a signal peptide. The helical transmembrane segment at 276–296 (FIIIAGSDTVAATLTFAFFYL) threads the bilayer. Asn-336 carries an N-linked (GlcNAc...) asparagine glycan. Cys-418 contacts heme.

This sequence belongs to the cytochrome P450 family. It depends on heme as a cofactor.

It is found in the membrane. The enzyme catalyses betaenone A + NADPH + O2 + H(+) = stemphyloxin II + NADP(+) + H2O. It catalyses the reaction betaenone C + NADPH + O2 + H(+) = stemphyloxin I + NADP(+) + H2O. Its pathway is mycotoxin biosynthesis. In terms of biological role, cytochrome P450 monooxygenase; part of the gene cluster that mediates the biosynthesis of the phytotoxin stemphyloxin II. The first step of the pathway is the synthesis of dehydroprobetaenone I by the polyketide synthase sthA and the enoyl reductase sthE via condensation of one acetyl-CoA starter unit with 7 malonyl-CoA units and 5 methylations. The C-terminal reductase (R) domain of sthA catalyzes the reductive release of the polyketide chain. Because sthA lacks a designated enoylreductase (ER) domain, the required activity is provided the enoyl reductase sthE. The short-chain dehydrogenase/reductase sthC then catalyzes reduction of dehydroprobetaenone I to probetaenone I. The cytochrome P450 monooxygenase sthF catalyzes successive epoxidation, oxidation (resulting from epoxide opening) and hydroxylation to install a tertiary alcohol in the decaline ring to yield betaenone C from dehydroprobetaenone I and betaenone B from probetaenone I. The FAD-linked oxidoreductase sthB is responsible for the conversion of betaenone C to betaenone A via an intramolecular aldol reaction between C-1 and C-17 to form the bridged tricyclic system in betaenone A. Finally, the cytochrome P450 monooxygenase sthD catalyzes the hydroxylation of C-15 to afford the final metabolite stemphyloxin II. The chain is Cytochrome P450 monooxygenase sthD from Phaeosphaeria nodorum (strain SN15 / ATCC MYA-4574 / FGSC 10173) (Glume blotch fungus).